We begin with the raw amino-acid sequence, 336 residues long: Ribosomal RNA small subunit methyltransferase C (336 aa).

This sequence belongs to the methyltransferase superfamily. RsmC family. Monomer.

The protein resides in the cytoplasm. The enzyme catalyses guanosine(1207) in 16S rRNA + S-adenosyl-L-methionine = N(2)-methylguanosine(1207) in 16S rRNA + S-adenosyl-L-homocysteine + H(+). Functionally, specifically methylates the guanine in position 1207 of 16S rRNA in the 30S particle. The chain is Ribosomal RNA small subunit methyltransferase C from Hamiltonella defensa subsp. Acyrthosiphon pisum (strain 5AT).